A 503-amino-acid chain; its full sequence is MEFSVKSGSPEKQRSACIVVGVFEPRRLSPIAEQLDKISDGYISALLRRGELEGKPGQTLLLHHVPNVLSERILLIGCGKERELDERQYKQVIQKTINTLNDTGSMEAVCFLTELHVKGRNNYWKVRQAVETAKETLYSFDQLKTNKSEPRRPLRKMVFNVPTRRELTSGERAIQHGLAIAAGIKAAKDLGNMPPNICNAAYLASQARQLADSYSKKVITRVIGEQQMRELGMNAYLAVGHGSQNESLMSVIEYKGNPSEDARPIVLVGKGLTFDSGGISIKPSEGMDEMKYDMCGAAAVYGVMRMVAELQLPINVIGVLAGCENMPGGRAYRPGDVLTTMSGQTVEVLNTDAEGRLVLCDVLTYVERFEPEAVIDVATLTGACVIALGHHITGLMSNHNPLAHELLGASEQAGDRAWRLPLGDEYQEQLESNFADMANIGGRPGGAITAGCFLSRFTRKYNWAHLDIAGTAWRSGKAKGATGRPVALLSQFLLNRAGFNGEE.

Lys-270 and Asp-275 together coordinate Mn(2+). Lys-282 is an active-site residue. The Mn(2+) site is built by Asp-293, Asp-352, and Glu-354. Arg-356 is a catalytic residue.

This sequence belongs to the peptidase M17 family. It depends on Mn(2+) as a cofactor.

The protein resides in the cytoplasm. The catalysed reaction is Release of an N-terminal amino acid, Xaa-|-Yaa-, in which Xaa is preferably Leu, but may be other amino acids including Pro although not Arg or Lys, and Yaa may be Pro. Amino acid amides and methyl esters are also readily hydrolyzed, but rates on arylamides are exceedingly low.. It catalyses the reaction Release of an N-terminal amino acid, preferentially leucine, but not glutamic or aspartic acids.. In terms of biological role, presumably involved in the processing and regular turnover of intracellular proteins. Catalyzes the removal of unsubstituted N-terminal amino acids from various peptides. The sequence is that of Probable cytosol aminopeptidase from Salmonella arizonae (strain ATCC BAA-731 / CDC346-86 / RSK2980).